The following is a 448-amino-acid chain: Probable metal transport system membrane protein CPn_0347/CP_0413/CPj0347/CpB0354 (448 aa).

Transmembrane regions (helical) follow at residues 15-35 (FLAVTLICMTTALWGTILLIS), 47-67 (ASYPGLLVGALMAQYVFSLQA), 69-89 (IFWIVLFGCAASVFGYGIIVF), 100-120 (SALCFVLVVFFAIGVILASYV), 144-164 (FLEATLAAIVFCASLFALWWW), 193-213 (LIFISLVIVSGVRSVGIVLIS), 233-253 (ILILSAFFGGISGALGSYISV), and 270-290 (LPTGPLVVICAGLLAGLCLLF).

It belongs to the ABC-3 integral membrane protein family.

It is found in the cell inner membrane. Its function is as follows. Part of an ATP-driven transport system CPn_0346/CPn_0347/CPn_0348/CPn_0349 for a metal. This chain is Probable metal transport system membrane protein CPn_0347/CP_0413/CPj0347/CpB0354, found in Chlamydia pneumoniae (Chlamydophila pneumoniae).